Here is a 427-residue protein sequence, read N- to C-terminus: Enolase (427 aa).

Q163 is a binding site for (2R)-2-phosphoglycerate. The active-site Proton donor is E205. The Mg(2+) site is built by D242, E285, and D312. The (2R)-2-phosphoglycerate site is built by K337, R366, S367, and K388. Catalysis depends on K337, which acts as the Proton acceptor.

This sequence belongs to the enolase family. Requires Mg(2+) as cofactor.

It is found in the cytoplasm. The protein localises to the secreted. It localises to the cell surface. The enzyme catalyses (2R)-2-phosphoglycerate = phosphoenolpyruvate + H2O. It participates in carbohydrate degradation; glycolysis; pyruvate from D-glyceraldehyde 3-phosphate: step 4/5. In terms of biological role, catalyzes the reversible conversion of 2-phosphoglycerate (2-PG) into phosphoenolpyruvate (PEP). It is essential for the degradation of carbohydrates via glycolysis. This is Enolase from Bradyrhizobium sp. (strain BTAi1 / ATCC BAA-1182).